Reading from the N-terminus, the 571-residue chain is Hemagglutinin-neuraminidase (571 aa).

Over 1 to 25 the chain is Intravirion; that stretch reads MEDYSNLSLKSIPKRTCRIIFRTAT. The chain crosses the membrane as a helical span at residues 26–46; it reads ILGICTLIVLCSSILHEIIHL. The Virion surface segment spans residues 47-571; it reads DVSSGLMDSD…IIPFLRELIP (525 aa). 3 disulfides stabilise this stretch: Cys166–Cys190, Cys180–Cys241, and Cys232–Cys245. Residues 228–233 form an involved in neuraminidase activity region; that stretch reads NRKSCS. N-linked (GlcNAc...) asparagine; by host glycosylation is found at Asn272, Asn284, and Asn335. Disulfide bonds link Cys338-Cys459, Cys370-Cys380, and Cys453-Cys463. N-linked (GlcNAc...) asparagine; by host glycosylation is found at Asn386, Asn454, Asn498, Asn501, Asn517, and Asn522. The cysteines at positions 535 and 546 are disulfide-linked.

The protein belongs to the paramyxoviruses hemagglutinin-neuraminidase family. As to quaternary structure, homotetramer; composed of disulfide-linked homodimers. Interacts with F protein trimer.

The protein localises to the virion membrane. The protein resides in the host cell membrane. It carries out the reaction Hydrolysis of alpha-(2-&gt;3)-, alpha-(2-&gt;6)-, alpha-(2-&gt;8)- glycosidic linkages of terminal sialic acid residues in oligosaccharides, glycoproteins, glycolipids, colominic acid and synthetic substrates.. In terms of biological role, attaches the virus to sialic acid-containing cell receptors and thereby initiating infection. Binding of HN protein to the receptor induces a conformational change that allows the F protein to trigger virion/cell membranes fusion. Its function is as follows. Neuraminidase activity ensures the efficient spread of the virus by dissociating the mature virions from the neuraminic acid containing glycoproteins. The sequence is that of Hemagglutinin-neuraminidase (HN) from Homo sapiens (Human).